A 405-amino-acid polypeptide reads, in one-letter code: Dihydrolipoyllysine-residue succinyltransferase component of 2-oxoglutarate dehydrogenase complex (405 aa).

Residues 3 to 78 enclose the Lipoyl-binding domain; sequence SVDILVPDLP…TSRQILGRLR (76 aa). Residue Lys44 is modified to N6-lipoyllysine. The interval 75–111 is disordered; that stretch reads GRLREGNSAGKETSAKSEEKASTPAQRQQASLEEQNN. Over residues 97–111 the composition is skewed to polar residues; sequence TPAQRQQASLEEQNN. Positions 113–150 constitute a Peripheral subunit-binding (PSBD) domain; that stretch reads ALSPAIRRLLAEHNLDASAIKGTGVGGRLTREDVEKHL. Lys148 carries the N6-acetyllysine modification. A compositionally biased stretch (low complexity) spans 153–173; the sequence is APAKESAPAAAAPAAQPALAA. A disordered region spans residues 153–178; sequence APAKESAPAAAAPAAQPALAARSEKR. Active-site residues include His376 and Asp380.

This sequence belongs to the 2-oxoacid dehydrogenase family. As to quaternary structure, forms a 24-polypeptide structural core with octahedral symmetry. Part of the 2-oxoglutarate dehydrogenase (OGDH) complex composed of E1 (2-oxoglutarate dehydrogenase), E2 (dihydrolipoamide succinyltransferase) and E3 (dihydrolipoamide dehydrogenase); the complex contains multiple copies of the three enzymatic components (E1, E2 and E3). Interacts with SucA (via N-terminus), the E1 component of OGDH complex. Requires (R)-lipoate as cofactor.

The enzyme catalyses N(6)-[(R)-dihydrolipoyl]-L-lysyl-[protein] + succinyl-CoA = N(6)-[(R)-S(8)-succinyldihydrolipoyl]-L-lysyl-[protein] + CoA. The protein operates within amino-acid degradation; L-lysine degradation via saccharopine pathway; glutaryl-CoA from L-lysine: step 6/6. E2 component of the 2-oxoglutarate dehydrogenase (OGDH) complex which catalyzes the second step in the conversion of 2-oxoglutarate to succinyl-CoA and CO(2). The chain is Dihydrolipoyllysine-residue succinyltransferase component of 2-oxoglutarate dehydrogenase complex (sucB) from Escherichia coli O157:H7.